Consider the following 163-residue polypeptide: ATP synthase subunit b 1 (163 aa).

A helical membrane pass occupies residues 7 to 27 (AETWVAIAFVILMGIFAYLGV).

Belongs to the ATPase B chain family. As to quaternary structure, F-type ATPases have 2 components, F(1) - the catalytic core - and F(0) - the membrane proton channel. F(1) has five subunits: alpha(3), beta(3), gamma(1), delta(1), epsilon(1). F(0) has three main subunits: a(1), b(2) and c(10-14). The alpha and beta chains form an alternating ring which encloses part of the gamma chain. F(1) is attached to F(0) by a central stalk formed by the gamma and epsilon chains, while a peripheral stalk is formed by the delta and b chains.

The protein resides in the cell inner membrane. F(1)F(0) ATP synthase produces ATP from ADP in the presence of a proton or sodium gradient. F-type ATPases consist of two structural domains, F(1) containing the extramembraneous catalytic core and F(0) containing the membrane proton channel, linked together by a central stalk and a peripheral stalk. During catalysis, ATP synthesis in the catalytic domain of F(1) is coupled via a rotary mechanism of the central stalk subunits to proton translocation. Functionally, component of the F(0) channel, it forms part of the peripheral stalk, linking F(1) to F(0). The polypeptide is ATP synthase subunit b 1 (Rhodopseudomonas palustris (strain HaA2)).